We begin with the raw amino-acid sequence, 496 residues long: Versicolorin B desaturase stcL (496 aa).

A helical transmembrane segment spans residues 3 to 23; that stretch reads FLSLPILTALGAVVYVLFQLV. C440 serves as a coordination point for heme.

The protein belongs to the cytochrome P450 family. Heme serves as cofactor.

The protein resides in the membrane. The enzyme catalyses versicolorin B + NADPH + O2 + H(+) = versicolorin A + NADP(+) + 2 H2O. It functions in the pathway mycotoxin biosynthesis; sterigmatocystin biosynthesis. In terms of biological role, cytochrome P450 monooxygenase; part of the gene cluster that mediates the biosynthesis of sterigmatocystin (ST), a polyketide-derived furanocoumarin which is part of the most toxic and carcinogenic compounds among the known mycotoxins. The first step in the biosynthesis of sterigmatocystin is the production of hexanoate by the fatty acid synthase (FAS) units stcJ and stcK. The polyketide backbone is assembled by the non-reducing polyketide synthase stcA by condensation of the starter hexanoyl-CoA and 7 malonyl-CoA extender units followed by cyclization and release of norsolorinic acid. Norsolorinic acid is the first stable intermediate in the biosynthesis of sterigmatocystin and is converted into averantin (AVN) by the ketoreductase stcE which reduces the hexanoate ketone to an alcohol. Averantin is then oxidized into 5'-hydroxyaverantin (HAVN) by the cytochrome P450 monooxygenase stcF. 5'-hydroxyaverantin is further converted to 5'-oxyaverantin (OAVN) by the 5'-hydroxyaverantin dehydrogenase stcG. The next step is the conversion of OAVN into averufin (AVF) which is catalyzed by a yet to be identified enzyme. The cytochrome P450 monooxygenase stcB and the flavin-binding monooxygenase stcW are both required for the conversion of averufin to 1-hydroxyversicolorone. The esterase stcI probably catalyzes the formation of versiconal hemiacetal acetate from 1-hydroxyversicolorone. The oxydoreductase stcN then probably catalyzes the biosynthetic step from versiconal to versicolorin B (VERB). The next step is performed by the versicolorin B desaturase stcL to produce versicolorin A (VERA). The ketoreductase stcU and the cytochrome P450 monooxygenase stcS are involved in the conversion of versicolorin A to demethylsterigmatocystin. The Baeyer-Villiger oxidas stcQ and the reductase stcR might be involved in the biosynthetic step from versicolorin A to demethylsterigmatocystin. The final step in the biosynthesis of sterigmatocystin is the methylation of demethylsterigmatocystin catalyzed by the methyltransferase stcP. This Emericella nidulans (strain FGSC A4 / ATCC 38163 / CBS 112.46 / NRRL 194 / M139) (Aspergillus nidulans) protein is Versicolorin B desaturase stcL.